The chain runs to 289 residues: Toxin tox21A (289 aa).

The signal sequence occupies residues 1–14 (MNLYFLFFISTILA). Positions 15-27 (AKPFNSFNKTSLI) are excised as a propeptide. Residues 270–289 (DKDITVHENAGDPKSDSRRC) are disordered.

Contains several disulfide bonds. As to expression, posterior glands which appear to be connected with the stylet through a series of ducts.

Its subcellular location is the secreted. In terms of biological role, has contracting-paralyzing activity in insect larvae. The sequence is that of Toxin tox21A from Pyemotes tritici (Straw itch mite).